A 211-amino-acid polypeptide reads, in one-letter code: Ribosomal RNA small subunit methyltransferase G (211 aa).

S-adenosyl-L-methionine is bound by residues glycine 75, leucine 80, 130-131, and arginine 145; that span reads VE.

The protein belongs to the methyltransferase superfamily. RNA methyltransferase RsmG family.

The protein resides in the cytoplasm. It catalyses the reaction guanosine(527) in 16S rRNA + S-adenosyl-L-methionine = N(7)-methylguanosine(527) in 16S rRNA + S-adenosyl-L-homocysteine. Functionally, specifically methylates the N7 position of guanine in position 527 of 16S rRNA. In Aromatoleum aromaticum (strain DSM 19018 / LMG 30748 / EbN1) (Azoarcus sp. (strain EbN1)), this protein is Ribosomal RNA small subunit methyltransferase G.